We begin with the raw amino-acid sequence, 120 residues long: C-type natriuretic peptide 4 (120 aa).

The first 22 residues, 1–22, serve as a signal peptide directing secretion; it reads MNLSYLVACGLMITLLSVRMGA. Residues 23 to 96 constitute a propeptide that is removed on maturation; the sequence is KPLSQAQQKS…PRRHKTGIKK (74 aa). A disulfide bridge connects residues Cys-104 and Cys-120.

The protein belongs to the natriuretic peptide family.

Its subcellular location is the secreted. Functionally, exhibits natriuretic and vasodepressant activity. Has cGMP-stimulating activity. May help to regulate body fluid homeostasis in a variety of aquatic environments. In Takifugu rubripes (Japanese pufferfish), this protein is C-type natriuretic peptide 4.